A 294-amino-acid polypeptide reads, in one-letter code: 4-hydroxy-tetrahydrodipicolinate synthase (294 aa).

Pyruvate is bound at residue threonine 45. Catalysis depends on tyrosine 133, which acts as the Proton donor/acceptor. The active-site Schiff-base intermediate with substrate is the lysine 161. Position 203 (isoleucine 203) interacts with pyruvate.

Belongs to the DapA family. In terms of assembly, homotetramer; dimer of dimers.

It is found in the cytoplasm. The enzyme catalyses L-aspartate 4-semialdehyde + pyruvate = (2S,4S)-4-hydroxy-2,3,4,5-tetrahydrodipicolinate + H2O + H(+). Its pathway is amino-acid biosynthesis; L-lysine biosynthesis via DAP pathway; (S)-tetrahydrodipicolinate from L-aspartate: step 3/4. Functionally, catalyzes the condensation of (S)-aspartate-beta-semialdehyde [(S)-ASA] and pyruvate to 4-hydroxy-tetrahydrodipicolinate (HTPA). This Buchnera aphidicola subsp. Baizongia pistaciae (strain Bp) protein is 4-hydroxy-tetrahydrodipicolinate synthase.